We begin with the raw amino-acid sequence, 545 residues long: Chaperonin GroEL 2 (545 aa).

Residues 29–32, 86–90, Gly-413, 479–481, and Asp-495 each bind ATP; these read TLGP, DGTTT, and NAA.

This sequence belongs to the chaperonin (HSP60) family. Forms a cylinder of 14 subunits composed of two heptameric rings stacked back-to-back. Interacts with the co-chaperonin GroES.

The protein resides in the cytoplasm. It catalyses the reaction ATP + H2O + a folded polypeptide = ADP + phosphate + an unfolded polypeptide.. Together with its co-chaperonin GroES, plays an essential role in assisting protein folding. The GroEL-GroES system forms a nano-cage that allows encapsulation of the non-native substrate proteins and provides a physical environment optimized to promote and accelerate protein folding. The sequence is that of Chaperonin GroEL 2 from Prochlorococcus marinus (strain SARG / CCMP1375 / SS120).